We begin with the raw amino-acid sequence, 229 residues long: Potassium/proton antiporter CemA (229 aa).

4 helical membrane passes run 7-27 (FTSL…SLSF), 114-134 (IICF…LVIL), 145-165 (LSDT…IGFH), and 189-209 (ILSS…KFWV).

This sequence belongs to the CemA family.

The protein localises to the plastid. It localises to the chloroplast inner membrane. The enzyme catalyses K(+)(in) + H(+)(out) = K(+)(out) + H(+)(in). Functionally, contributes to K(+)/H(+) antiport activity by supporting proton efflux to control proton extrusion and homeostasis in chloroplasts in a light-dependent manner to modulate photosynthesis. Prevents excessive induction of non-photochemical quenching (NPQ) under continuous-light conditions. Indirectly promotes efficient inorganic carbon uptake into chloroplasts. The chain is Potassium/proton antiporter CemA from Daucus carota (Wild carrot).